The following is a 132-amino-acid chain: Small ribosomal subunit protein uS9 (132 aa).

Positions 100 to 132 (LKSNGLLTRDDRTKERKKPGLKRARKAPQYTKR) are disordered. The span at 114–132 (ERKKPGLKRARKAPQYTKR) shows a compositional bias: basic residues.

Belongs to the universal ribosomal protein uS9 family.

In Dehalococcoides mccartyi (strain ATCC BAA-2100 / JCM 16839 / KCTC 5957 / BAV1), this protein is Small ribosomal subunit protein uS9.